The sequence spans 492 residues: MPQVTKTNNENEFRLTRSKVQHQESISTIKNTTISNSQHKQQTQQQISSPPQVSVTSSEGVSHVNTRQYLGDVSNQYITNAKPTNKRKPLGGDNAPLQKQQHRPSRPIPIASDNNNNGSTSSSSNSSNNNNNDANRLASLAVPSRLPQKRQATESSTNLVEKLRVPQPEVGERSQSYHKKSRLIDYEWQDLDEEDSDDQLMVSEYVNEIFSYYYELETRMLPDPQYLFKQTLLKPRMRSILVDWLVEMHLKFKLLPESLFLAVNVMDRFMSVEVVQIDKLQLLATAALFTAAKYEEVFSPSVKNYAYFTDGSYTPEEVVQAEKYMLTILNFDLNYPNPMNFLRRISKADDYDVQSRTLGKYLLEITIVDYKFIGMRPSLCCASAMYLARLILGKLPVWNGNLIHYSGGYRISDMRECIELMFQYLIAPIEHDEFFKKYAMRKFMRASTLCRNWAKKFQASGRDLFDERLSTHRLTLEDDDEEEEIVVAEAEE.

Positions 1 to 176 are disordered; the sequence is MPQVTKTNNE…QPEVGERSQS (176 aa). The segment covering 23–33 has biased composition (polar residues); it reads QESISTIKNTT. Positions 34-58 are enriched in low complexity; the sequence is ISNSQHKQQTQQQISSPPQVSVTSS. A compositionally biased stretch (polar residues) spans 59–83; the sequence is EGVSHVNTRQYLGDVSNQYITNAKP. Over residues 111–135 the composition is skewed to low complexity; the sequence is ASDNNNNGSTSSSSNSSNNNNNDAN. Residues 208–334 enclose the Cyclin N-terminal domain; it reads EIFSYYYELE…MLTILNFDLN (127 aa).

It belongs to the cyclin family. Cyclin AB subfamily.

In terms of biological role, 2/mitotic-specific cyclin essential for the control of the cell cycle at the G2/M (mitosis) transition. G2/M cyclins accumulate steadily during G2 and are abruptly destroyed at mitosis. Degradation is necessary for the cell to exit from mitosis. Plays a role in morphogenesis by negatively regulating polarized growth. Through binding to CDC28 regulates cytokinesis, partly by phosphorylation of the actomyosin ring component IQG1. Also involved in the phosphorylation of CDC6 and CDC54. In Candida albicans (strain SC5314 / ATCC MYA-2876) (Yeast), this protein is G2/mitotic-specific cyclin CLB2 (CLB2).